A 112-amino-acid polypeptide reads, in one-letter code: Conotoxin vil14.4 (112 aa).

Positions 1–22 are cleaved as a signal peptide; it reads MGFRVLVLVVMATTSALPFTFF. Positions 23-85 are excised as a propeptide; it reads EEPGRSPFRP…FAELSVGQRR (63 aa). Disulfide bonds link C91-C111 and C95-C107.

The protein belongs to the conotoxin R superfamily. As to expression, expressed by the venom duct.

It is found in the secreted. The sequence is that of Conotoxin vil14.4 from Conus villepinii (Villepin's cone).